The sequence spans 286 residues: Bifunctional protein FolD (286 aa).

Residues 165–167 (GRS), S190, and V231 contribute to the NADP(+) site.

The protein belongs to the tetrahydrofolate dehydrogenase/cyclohydrolase family. As to quaternary structure, homodimer.

The catalysed reaction is (6R)-5,10-methylene-5,6,7,8-tetrahydrofolate + NADP(+) = (6R)-5,10-methenyltetrahydrofolate + NADPH. It catalyses the reaction (6R)-5,10-methenyltetrahydrofolate + H2O = (6R)-10-formyltetrahydrofolate + H(+). It participates in one-carbon metabolism; tetrahydrofolate interconversion. Its function is as follows. Catalyzes the oxidation of 5,10-methylenetetrahydrofolate to 5,10-methenyltetrahydrofolate and then the hydrolysis of 5,10-methenyltetrahydrofolate to 10-formyltetrahydrofolate. In Bacillus mycoides (strain KBAB4) (Bacillus weihenstephanensis), this protein is Bifunctional protein FolD.